The chain runs to 949 residues: Inactive atromentin synthetase invA3 (949 aa).

The adenylation (A) domain stretch occupies residues 38-460 (RAVSQYPNHE…SGRIKDTVVV (423 aa)). One can recognise a Carrier domain in the interval 592-670 (ALSTETEKTL…NLAKYVDSLV (79 aa)). The thiolation and peptide carrier (T) domain stretch occupies residues 597–667 (TEKTLAGIYA…VISNLAKYVD (71 aa)). Serine 629 carries the O-(pantetheine 4'-phosphoryl)serine modification. The segment at 693 to 934 (PIFMVHPGMA…YTLMDFDHVA (242 aa)) is thioesterase (TE) domain.

It belongs to the ATP-dependent AMP-binding enzyme family.

In terms of biological role, inactive atromentin synthetase homolog. While the invA3 adenylation (A) domain is capable of adenylating 4-hydroxyphenylpyruvate (4-HPP), the invA3 enzyme is inactive because of its non-functional thioesterase (TE) domain. The polypeptide is Inactive atromentin synthetase invA3 (invA3) (Paxillus involutus (Naked brimcap)).